The sequence spans 256 residues: tRNA (guanine-N(7)-)-methyltransferase (256 aa).

The tract at residues 1–43 (MDVDPVNSEMELDNKPTCETVPGLPQKKHYRQRAHSNPHSDHD) is disordered. Residues 26–36 (QKKHYRQRAHS) show a composition bias toward basic residues. S-adenosyl-L-methionine-binding positions include Gly74, 97–98 (EI), 132–133 (NA), and Leu152. Asp155 is a catalytic residue. Residue 230–232 (TEE) coordinates S-adenosyl-L-methionine.

The protein belongs to the class I-like SAM-binding methyltransferase superfamily. TrmB family.

The protein localises to the nucleus. The catalysed reaction is guanosine(46) in tRNA + S-adenosyl-L-methionine = N(7)-methylguanosine(46) in tRNA + S-adenosyl-L-homocysteine. It participates in tRNA modification; N(7)-methylguanine-tRNA biosynthesis. Functionally, catalyzes the formation of N(7)-methylguanine at position 46 (m7G46) in tRNA. In Caenorhabditis briggsae, this protein is tRNA (guanine-N(7)-)-methyltransferase.